The primary structure comprises 968 residues: Pumilio homolog 1 (968 aa).

Disordered stretches follow at residues 1-25 (MIPELGRRPMHRGNEDSSFGDDYEK) and 138-171 (NNVLGGVGDRRKVNDNRSLFSMPPGFEGEKTGAS). Ser-194 carries the post-translational modification Phosphoserine. Disordered regions lie at residues 204 to 240 (GHGHPVAQQPSRPASRNTFDENVDSNNNLSPSASQGI), 260 to 303 (GTPD…VTSG), and 360 to 382 (KSDQAHKATGSLRNSQLRGPHGS). 2 stretches are compositionally biased toward polar residues: residues 211 to 220 (QQPSRPASRN) and 227 to 238 (DSNNNLSPSASQ). Thr-261 is subject to Phosphothreonine. The span at 291-303 (TSNQSPFNGVTSG) shows a compositional bias: polar residues. The PUM-HD domain occupies 610–950 (FGSSMLEEFK…HVVARIEKLV (341 aa)). Pumilio repeat units follow at residues 630 to 665 (EIAGHVVEFSSDQYGSRFIQQKLETATTDEKNMVYE), 666 to 701 (EIMPQALVLMTDVFGNYVIQKFFEHGLPPQRRELAE), 702 to 737 (KLFDHVLPLSLQMYGCRVIQKAIEVVDLDQKIKMVK), 738 to 773 (ELDGHVMRCVRDQNGNHVVQKCIECVPEENIEFIIS), 774 to 810 (TFFGHVVTLSTHPYGCRVIQRVLEHCHDPDTQSKVME), 811 to 846 (EILSTVSMLAQDQYGNYVVQHVLEHGKPDERTVIIK), 847 to 882 (ELAGKIVQMSQQKFASNVVEKCLTFGGPEERELLVN), and 883 to 924 (EMLG…LILT).

It is found in the cytoplasm. Functionally, sequence-specific RNA-binding protein that regulates translation and mRNA stability by binding the 3'-UTR of target mRNAs. Binds the APUM-binding elements (APBEs) in the 3'-UTR mRNA sequence of CLV1, PNH, WUS and FAS2. This Arabidopsis thaliana (Mouse-ear cress) protein is Pumilio homolog 1 (APUM1).